Reading from the N-terminus, the 281-residue chain is MITTQEIQQIREQIRTWRTKGETIAFVPTMGNLHLGHITLIKEAAKRADHVVASIFVNPMQFGANEDLDAYPRTLEADKLALSDAGAELLFTPTPDIIYPKGMEQQTYVEVPKIGDQLCGASRPGHFRGVATVVCKLFNIVQPDIALFGRKDFQQLMIIKTMVEDLSLPIEIVGIDTIRETSGLAMSSRNGYLSTAQKSQAAVLKQTMDQISSAVKQGASLDLAIENGKQALIDSGFTPDYLELRNAKDLSLVTDGQDELVILAAAYMGNTRLIDNLCFTR.

30–37 (MGNLHLGH) contributes to the ATP binding site. His-37 (proton donor) is an active-site residue. Gln-61 contributes to the (R)-pantoate binding site. Gln-61 is a beta-alanine binding site. 149–152 (GRKD) is an ATP binding site. Gln-155 is a binding site for (R)-pantoate. ATP contacts are provided by residues Ile-178 and 186–189 (MSSR).

It belongs to the pantothenate synthetase family. As to quaternary structure, homodimer.

The protein resides in the cytoplasm. It carries out the reaction (R)-pantoate + beta-alanine + ATP = (R)-pantothenate + AMP + diphosphate + H(+). The protein operates within cofactor biosynthesis; (R)-pantothenate biosynthesis; (R)-pantothenate from (R)-pantoate and beta-alanine: step 1/1. Catalyzes the condensation of pantoate with beta-alanine in an ATP-dependent reaction via a pantoyl-adenylate intermediate. The sequence is that of Pantothenate synthetase from Shewanella woodyi (strain ATCC 51908 / MS32).